We begin with the raw amino-acid sequence, 98 residues long: NADH-ubiquinone oxidoreductase chain 4L (98 aa).

3 helical membrane-spanning segments follow: residues 1-21 (MALT…GLLM), 29-49 (SLLC…LTIL), and 61-81 (IILL…LVMV).

The protein belongs to the complex I subunit 4L family. Core subunit of respiratory chain NADH dehydrogenase (Complex I) which is composed of 45 different subunits.

The protein localises to the mitochondrion inner membrane. The catalysed reaction is a ubiquinone + NADH + 5 H(+)(in) = a ubiquinol + NAD(+) + 4 H(+)(out). Core subunit of the mitochondrial membrane respiratory chain NADH dehydrogenase (Complex I) which catalyzes electron transfer from NADH through the respiratory chain, using ubiquinone as an electron acceptor. Part of the enzyme membrane arm which is embedded in the lipid bilayer and involved in proton translocation. The sequence is that of NADH-ubiquinone oxidoreductase chain 4L (MT-ND4L) from Pteropus dasymallus (Ryukyu flying fox).